A 554-amino-acid chain; its full sequence is uncharacterized protein (554 aa).

The segment at 1-25 (MSSSIPPRLYDMSPTESKKQEDVSE) is disordered. Serine 13 bears the Phosphoserine mark. Helical transmembrane passes span 82–102 (FFVA…TSLI), 120–140 (APYL…VWSL), 149–169 (WAFN…GASP), 171–191 (FASI…NLPV), 210–230 (VMSF…WGLI), and 253–273 (FLFT…LVSV). A Phosphoserine modification is found at serine 334. The next 6 membrane-spanning stretches (helical) occupy residues 364–384 (LAIS…AFPL), 412–432 (SLIV…LVEF), 437–457 (KGTL…STTA), 462–482 (AYLG…GVLY), 497–517 (AVGL…VIAM), and 525–545 (APIF…VFFP).

This sequence belongs to the major facilitator superfamily.

The protein localises to the endoplasmic reticulum. It localises to the membrane. This is an uncharacterized protein from Schizosaccharomyces pombe (strain 972 / ATCC 24843) (Fission yeast).